The sequence spans 528 residues: Peptide chain release factor 3 (528 aa).

A tr-type G domain is found at 10 to 279; sequence AKRRTFAIIS…GLVEWAPAPM (270 aa). Residues 19–26, 87–91, and 141–144 contribute to the GTP site; these read SHPDAGKT, DTPGH, and NKLD.

It belongs to the TRAFAC class translation factor GTPase superfamily. Classic translation factor GTPase family. PrfC subfamily.

Its subcellular location is the cytoplasm. Its function is as follows. Increases the formation of ribosomal termination complexes and stimulates activities of RF-1 and RF-2. It binds guanine nucleotides and has strong preference for UGA stop codons. It may interact directly with the ribosome. The stimulation of RF-1 and RF-2 is significantly reduced by GTP and GDP, but not by GMP. This Escherichia coli O1:K1 / APEC protein is Peptide chain release factor 3.